A 424-amino-acid chain; its full sequence is Serine--tRNA ligase (424 aa).

Position 229-231 (229-231) interacts with L-serine; that stretch reads TAE. ATP is bound by residues 260-262 and Val-276; that span reads RTE. L-serine is bound at residue Glu-283. Residue 347-350 coordinates ATP; the sequence is EVTS. Thr-382 is a binding site for L-serine.

It belongs to the class-II aminoacyl-tRNA synthetase family. Type-1 seryl-tRNA synthetase subfamily. In terms of assembly, homodimer. The tRNA molecule binds across the dimer.

It is found in the cytoplasm. It catalyses the reaction tRNA(Ser) + L-serine + ATP = L-seryl-tRNA(Ser) + AMP + diphosphate + H(+). The enzyme catalyses tRNA(Sec) + L-serine + ATP = L-seryl-tRNA(Sec) + AMP + diphosphate + H(+). It participates in aminoacyl-tRNA biosynthesis; selenocysteinyl-tRNA(Sec) biosynthesis; L-seryl-tRNA(Sec) from L-serine and tRNA(Sec): step 1/1. Catalyzes the attachment of serine to tRNA(Ser). Is also able to aminoacylate tRNA(Sec) with serine, to form the misacylated tRNA L-seryl-tRNA(Sec), which will be further converted into selenocysteinyl-tRNA(Sec). The protein is Serine--tRNA ligase of Rubrobacter xylanophilus (strain DSM 9941 / JCM 11954 / NBRC 16129 / PRD-1).